A 304-amino-acid polypeptide reads, in one-letter code: Homoserine dehydrogenase (304 aa).

Positions 8, 10, 11, 38, 39, and 73 each coordinate NADP(+). NADPH is bound at residue Y8. V11 and R38 together coordinate NADPH. V11 is a binding site for NAD(+). S73, S74, T100, and K102 together coordinate NADPH. Position 73 (S73) interacts with NAD(+). NADP(+) is bound by residues T100 and K102. Positions 129 and 133 each coordinate Na(+). G182 and E185 together coordinate NADP(+). L-homoserine-binding residues include E185 and D196. The active-site Proton donor is K200. Residue G284 participates in NADP(+) binding. Position 284 (G284) interacts with NADPH. G284 serves as a coordination point for NAD(+).

The protein belongs to the homoserine dehydrogenase family. In terms of assembly, homodimer. A metal cation serves as cofactor. Post-translationally, the enzyme is activated by reductive cleavage of the interchain disulfide bond between the two subunits.

It carries out the reaction L-homoserine + NADP(+) = L-aspartate 4-semialdehyde + NADPH + H(+). It catalyses the reaction L-homoserine + NAD(+) = L-aspartate 4-semialdehyde + NADH + H(+). It functions in the pathway amino-acid biosynthesis; L-methionine biosynthesis via de novo pathway; L-homoserine from L-aspartate: step 3/3. It participates in amino-acid biosynthesis; L-threonine biosynthesis; L-threonine from L-aspartate: step 3/5. With respect to regulation, inhibited by cysteine. In terms of biological role, catalyzes the conversion of L-aspartate-beta-semialdehyde (L-Asa) to L-homoserine (L-Hse), the third step in the biosynthesis of threonine and methionine from aspartate. The protein is Homoserine dehydrogenase of Sulfurisphaera tokodaii (strain DSM 16993 / JCM 10545 / NBRC 100140 / 7) (Sulfolobus tokodaii).